Here is a 1216-residue protein sequence, read N- to C-terminus: Probable phospholipid-transporting ATPase 4 (1216 aa).

Residues 1-74 (MARGRIRSKL…TTRYNLITFF (74 aa)) lie on the Cytoplasmic side of the membrane. A helical membrane pass occupies residues 75–96 (PKCLYEQFHRAANFYFLVAAIL). Residues 97 to 100 (SVFP) are Extracellular-facing. Residues 101–123 (LSPFNKWSMIAPLVFVVGLSMLK) form a helical membrane-spanning segment. The Cytoplasmic portion of the chain corresponds to 124 to 305 (EALEDWSRFM…SRIEKTMDYI (182 aa)). A helical transmembrane segment spans residues 306 to 327 (IYTLLVLLILISCISSSGFAWE). At 328–359 (TKFHMPKWWYLRPEEPENLTNPSNPVYAGFVH) the chain is on the extracellular side. A helical transmembrane segment spans residues 360–377 (LITALLLYGYLIPISLYV). Residues 378 to 922 (SIEVVKVLQA…HGHWCYKRIA (545 aa)) lie on the Cytoplasmic side of the membrane. Asp-425 serves as the catalytic 4-aspartylphosphate intermediate. A Glycyl lysine isopeptide (Lys-Gly) (interchain with G-Cter in ubiquitin) cross-link involves residue Lys-605. Positions 867 and 871 each coordinate Mg(2+). The chain crosses the membrane as a helical span at residues 923–942 (QMICYFFYKNIAFGLTLFYF). Residues 943–956 (EAFTGFSGQSVYND) are Extracellular-facing. The chain crosses the membrane as a helical span at residues 957–976 (YYLLLFNVVLTSLPVIALGV). The Cytoplasmic segment spans residues 977–1006 (FEQDVSSEICLQFPALYQQGKKNLFFDWYR). Residues 1007-1029 (ILGWMGNGVYSSLVIFFLNIGII) traverse the membrane as a helical segment. Residues 1030–1042 (YEQAFRVSGQTAD) lie on the Extracellular side of the membrane. A helical membrane pass occupies residues 1043 to 1065 (MDAVGTTMFTCIIWAVNVQIALT). The Cytoplasmic portion of the chain corresponds to 1066–1071 (VSHFTW). The chain crosses the membrane as a helical span at residues 1072-1092 (IQHVLIWGSIGLWYLFVALYG). Over 1093 to 1109 (MMPPSLSGNIYRILVEI) the chain is Extracellular. The helical transmembrane segment at 1110–1134 (LAPAPIYWIATFLVTVTTVLPYFAH) threads the bilayer. The Cytoplasmic segment spans residues 1135–1216 (ISFQRFLHPL…TQDTMSPRSV (82 aa)). Positions 1195–1216 (LNKKQSNMSQFSTQDTMSPRSV) are disordered. Residues 1198–1216 (KQSNMSQFSTQDTMSPRSV) show a composition bias toward polar residues.

Belongs to the cation transport ATPase (P-type) (TC 3.A.3) family. Type IV subfamily.

Its subcellular location is the membrane. The enzyme catalyses ATP + H2O + phospholipidSide 1 = ADP + phosphate + phospholipidSide 2.. In terms of biological role, involved in transport of phospholipids. The polypeptide is Probable phospholipid-transporting ATPase 4 (Arabidopsis thaliana (Mouse-ear cress)).